Reading from the N-terminus, the 438-residue chain is MEFKIEKKGTNKAIIEVEVEAEKFEEGLQKSYLKNAKYFKIPGFRPGKAPRSLIERAYGEEVFYDDAIDYVLNETYPKVIEESKLEVVSRPEVDIVQVGKGKSFIYKAEVYVKPEFELGQYKGVEITKIEYPVAEEEVEHELEHLREENARFVPVERPVENGDIVTIDFEGFVDGEPINGGSAKDYELTIGSNTFIPGFEEQLIGMNKGEEKEIEVTFPEDYQEPSLAGKKATFKVKVKDIKVKELPELDDEFAKDVSEFETLEELKANIRNRIREKNDKRAKDEMIDAILEKIAQNTSIDIPEPMIENQINYYVEDVARNLQYFGMTYERYLQAIGKTDKEFRSQFRERAEKAVRNNLILEKIAKVENIQATEEELQKELERLAKMYNLEVDKLKERLSEDDIEYIKEGIILNKAIDFIYENAKIISEDNQGENQEN.

The region spanning 162-247 (GDIVTIDFEG…VKDIKVKELP (86 aa)) is the PPIase FKBP-type domain.

The protein belongs to the FKBP-type PPIase family. Tig subfamily.

It is found in the cytoplasm. It carries out the reaction [protein]-peptidylproline (omega=180) = [protein]-peptidylproline (omega=0). Its function is as follows. Involved in protein export. Acts as a chaperone by maintaining the newly synthesized protein in an open conformation. Functions as a peptidyl-prolyl cis-trans isomerase. The chain is Trigger factor from Caldicellulosiruptor bescii (strain ATCC BAA-1888 / DSM 6725 / KCTC 15123 / Z-1320) (Anaerocellum thermophilum).